Consider the following 473-residue polypeptide: Dolichyl-diphosphooligosaccharide--protein glycosyltransferase subunit 1B (473 aa).

The first 27 residues, 1 to 27, serve as a signal peptide directing secretion; the sequence is MAPSLSTAVSSLLLLLLLAAAISVSSS. Residues 28–439 are Lumenal-facing; sequence PPMPEDSIRV…PFQVYYEFNP (412 aa). N-linked (GlcNAc...) asparagine glycosylation is found at Asn-307 and Asn-361. Residues 440-460 traverse the membrane as a helical segment; it reads IFMLAEPLMLISAVFLFFVAC. At 461 to 473 the chain is on the cytoplasmic side; that stretch reads IAYLHMDLSIGKS.

This sequence belongs to the OST1 family. As to quaternary structure, component of the oligosaccharyltransferase (OST) complex.

It is found in the endoplasmic reticulum membrane. It functions in the pathway protein modification; protein glycosylation. Subunit of the oligosaccharyl transferase (OST) complex that catalyzes the initial transfer of a defined glycan (Glc(3)Man(9)GlcNAc(2) in eukaryotes) from the lipid carrier dolichol-pyrophosphate to an asparagine residue within an Asn-X-Ser/Thr consensus motif in nascent polypeptide chains, the first step in protein N-glycosylation. N-glycosylation occurs cotranslationally and the complex associates with the Sec61 complex at the channel-forming translocon complex that mediates protein translocation across the endoplasmic reticulum (ER). All subunits are required for a maximal enzyme activity. The polypeptide is Dolichyl-diphosphooligosaccharide--protein glycosyltransferase subunit 1B (OST1B) (Oryza sativa subsp. japonica (Rice)).